The chain runs to 411 residues: Secretion apparatus protein BsaZ (411 aa).

4 helical membrane-spanning segments follow: residues 28-48, 80-100, 137-157, and 175-195; these read IVAL…VDLT, IAAP…LVQS, ALLY…LYHA, and IVLT…VLIL. The segment at 341–411 is disordered; the sequence is AANRGGPPPE…APARTGDQNA (71 aa). Over residues 370–404 the composition is skewed to low complexity; that stretch reads DACADNAFPDDAPPGAAAPNAGSPDGPAPDGGAPA.

Belongs to the type III secretion exporter family.

The protein resides in the cell membrane. In terms of biological role, part of the bsa type III secretion system, is involved in the intracellular replication of invading bacteria inside the host cell. Probably necessary for the lysis of the vacuole membrane and escape into the host cell cytoplasm. This is Secretion apparatus protein BsaZ (bsaZ) from Burkholderia pseudomallei (strain K96243).